The chain runs to 308 residues: Reticulon-like protein 1 (308 aa).

Polar residues-rich tracts occupy residues Met-1–Ala-17 and Pro-41–Ile-66. Disordered stretches follow at residues Met-1–Ala-22 and Pro-41–Ser-92. An N-linked (GlcNAc...) asparagine glycan is attached at Asn-65. The span at Ser-67–Pro-81 shows a compositional bias: low complexity. Residues Asn-113 and Asn-135 are each glycosylated (N-linked (GlcNAc...) asparagine). Residues Leu-127 to Lys-308 enclose the Reticulon domain. Helical transmembrane passes span Cys-138–Leu-158, Phe-166–Gly-186, Pro-233–Leu-253, and Tyr-255–Cys-275. N-linked (GlcNAc...) asparagine glycosylation occurs at Asn-303.

As to quaternary structure, interacts with TTS1 and YOP1.

The protein resides in the endoplasmic reticulum membrane. It localises to the nucleus membrane. Functionally, required for the correct positioning of the cellular division plane by delimiting the actomyosin ring assembly at the cell equator. Overexpression causes cell lysis. The chain is Reticulon-like protein 1 (rtn1) from Schizosaccharomyces pombe (strain 972 / ATCC 24843) (Fission yeast).